The chain runs to 142 residues: Small ribosomal subunit protein uS12 (142 aa).

This sequence belongs to the universal ribosomal protein uS12 family.

This chain is Small ribosomal subunit protein uS12, found in Tetrahymena thermophila.